The primary structure comprises 813 residues: Protein SBE22 (813 aa).

3 disordered regions span residues 1 to 66, 107 to 240, and 331 to 359; these read MIRP…HGHA, EIFS…GEFG, and QKDSATNSSSTITERITPGENQSQNNRES. Basic and acidic residues predominate over residues 56–66; sequence RPSDNLFHGHA. Residues 107-121 are compositionally biased toward low complexity; the sequence is EIFSTSSSDTQSNIS. Residues 127–138 are compositionally biased toward basic and acidic residues; the sequence is SEDHSFGMDKSV. Composition is skewed to polar residues over residues 139–160, 169–200, and 214–234; these read DNSSTNATLTNRSIENRSNGDS, VSVNRSTKSGNNPLQRTQSETISVNMSHNRSM, and KNSSIPNLRYNSQPQQDNRSV.

The protein belongs to the SBE2 family.

The protein resides in the cytoplasm. It is found in the golgi apparatus. With SBE2, is involved in cell wall integrity and polarity processes like bud growth. This chain is Protein SBE22 (SBE22), found in Candida glabrata (strain ATCC 2001 / BCRC 20586 / JCM 3761 / NBRC 0622 / NRRL Y-65 / CBS 138) (Yeast).